The chain runs to 838 residues: Leucine--tRNA ligase 1 (838 aa).

Residues 40-51 (PYPSGAGLHVGH) carry the 'HIGH' region motif. A 'KMSKS' region motif is present at residues 608–612 (KMSKS). Residue K611 coordinates ATP.

Belongs to the class-I aminoacyl-tRNA synthetase family.

Its subcellular location is the cytoplasm. The enzyme catalyses tRNA(Leu) + L-leucine + ATP = L-leucyl-tRNA(Leu) + AMP + diphosphate. The chain is Leucine--tRNA ligase 1 from Rhizobium johnstonii (strain DSM 114642 / LMG 32736 / 3841) (Rhizobium leguminosarum bv. viciae).